The chain runs to 2809 residues: Fibrillin-3 (2809 aa).

Residues 1–31 (MTLEGLYLARGPLARLLLAWSALLCMAGGQG) form the signal peptide. Residues 32-48 (RWDGALEAAGPGRVRRR) constitute a propeptide that is removed on maturation. An EGF-like 1 domain is found at 147-179 (GQPICDRGCHNGGRCIGPNRCACVYGFMGPQCE). 3 disulfides stabilise this stretch: Cys151/Cys161, Cys155/Cys167, and Cys169/Cys178. The region spanning 185-237 (GPCFGQVGPEGCQHQLTGLVCTKALCCATVGRAWGLPCELCPAQPHPCRRGFI) is the TB 1 domain. Positions 247-288 (DVDECQAVPGLCQGGSCVNMVGSFHCRCPVGHRLSDSSAACE) constitute an EGF-like 2; calcium-binding domain. Disulfide bonds link Cys251/Cys263, Cys258/Cys272, and Cys274/Cys287. One can recognise a TB 2 domain in the interval 293–346 (GACFSVLFGGRCAGDLAGHYTRRQCCCDRGRCWAAGPVPELCPPRGSNEFQQLC). Asn406 is a glycosylation site (N-linked (GlcNAc...) asparagine). Positions 408 to 448 (TIDICRHFTNLCLNGRCLPTPSSYRCECNVGYTQDVRGECI) constitute an EGF-like 3 domain. 15 cysteine pairs are disulfide-bonded: Cys412/Cys424, Cys419/Cys433, Cys435/Cys447, Cys453/Cys463, Cys458/Cys472, Cys474/Cys487, Cys493/Cys505, Cys500/Cys514, Cys516/Cys529, Cys535/Cys546, Cys541/Cys555, Cys557/Cys570, Cys576/Cys587, Cys582/Cys596, and Cys598/Cys611. One can recognise an EGF-like 4; calcium-binding domain in the interval 449-488 (DVDECTSSPCHHGDCVNIPGTYHCRCYPGFQATPTRQACV). Residues 489-530 (DVDECIVSGGLCHLGRCVNTEGSFQCVCNAGFELSPDGKNCV) form the EGF-like 5; calcium-binding domain. The EGF-like 6; calcium-binding domain maps to 531–571 (DHNECATSTMCVNGVCLNEDGSFSCLCKPGFLLAPGGHYCM). The region spanning 572 to 612 (DIDECQTPGICVNGHCTNTEGSFRCQCLGGLAVGTDGRVCV) is the EGF-like 7; calcium-binding domain. One can recognise a TB 3 domain in the interval 618-670 (STCYGAIEKGSCARPFPGTVTKSECCCANPDHGFGEPCQLCPAKDSAEFQALC). One can recognise an EGF-like 8; calcium-binding domain in the interval 682-723 (DINECALDPEVCANGVCENLRGSYRCVCNLGYEAGASGKDCT). 9 disulfide bridges follow: Cys686–Cys698, Cys693–Cys707, Cys709–Cys722, Cys728–Cys740, Cys735–Cys749, Cys751–Cys764, Cys770–Cys780, Cys775–Cys789, and Cys791–Cys804. The EGF-like 9; calcium-binding domain maps to 724–765 (DVDECALNSLLCDNGWCQNSPGSYSCSCPPGFHFWQDTEICK). An EGF-like 10; calcium-binding domain is found at 766 to 805 (DVDECLSSPCVSGVCRNLAGSYTCKCGPGSRLDPSGTFCL). The TB 4 domain occupies 810-861 (GTCWLKIQESRCEVNLQGASLRSECCATLGAAWGSPCERCEIDPACARGFAR). The region spanning 869 to 910 (DVNECESFPGVCPNGRCVNTAGSFRCECPEGLMLDASGRLCV) is the EGF-like 11; calcium-binding domain. 3 cysteine pairs are disulfide-bonded: Cys873/Cys885, Cys880/Cys894, and Cys896/Cys909. The 52-residue stretch at 915–966 (EPCFLRWDEDECGVTLPGKYRMDVCCCSIGAVWGVECEACPDPESLEFASLC) folds into the TB 5 domain. The 42-residue stretch at 986–1027 (DVNECKVFPGLCTHGTCRNTVGSFHCACAGGFALDAQERNCT) folds into the EGF-like 12; calcium-binding domain. Intrachain disulfides connect Cys990–Cys1002, Cys997–Cys1011, Cys1013–Cys1026, Cys1032–Cys1044, Cys1039–Cys1053, Cys1055–Cys1069, Cys1075–Cys1087, Cys1082–Cys1096, Cys1098–Cys1111, Cys1117–Cys1129, Cys1124–Cys1138, Cys1140–Cys1153, Cys1159–Cys1170, Cys1166–Cys1179, Cys1181–Cys1194, Cys1200–Cys1212, Cys1207–Cys1221, Cys1223–Cys1236, Cys1242–Cys1254, Cys1249–Cys1263, Cys1265–Cys1278, Cys1284–Cys1297, Cys1291–Cys1306, Cys1308–Cys1319, Cys1325–Cys1338, Cys1332–Cys1347, Cys1349–Cys1360, Cys1366–Cys1378, Cys1373–Cys1387, Cys1389–Cys1402, Cys1408–Cys1419, Cys1414–Cys1428, Cys1430–Cys1443, Cys1449–Cys1460, Cys1455–Cys1469, and Cys1471–Cys1484. A glycan (N-linked (GlcNAc...) asparagine) is linked at Asn1025. The 43-residue stretch at 1028–1070 (DIDECRISPDLCGQGTCVNTPGSFECECFPGYESGFMLMKNCM) folds into the EGF-like 13; calcium-binding domain. The EGF-like 14; calcium-binding domain occupies 1071-1112 (DVDECARDPLLCRGGTCTNTDGSYKCQCPPGHELTAKGTACE). The EGF-like 15; calcium-binding domain maps to 1113 to 1154 (DIDECSLSDGLCPHGQCVNVIGAFQCSCHAGFQSTPDRQGCV). Positions 1155 to 1195 (DINECRVQNGGCDVHCINTEGSYRCSCGQGYSLMPDGRACA) constitute an EGF-like 16; calcium-binding domain. Residues 1196–1237 (DVDECEENPRVCDQGHCTNMPGGHRCLCYDGFMATPDMRTCV) enclose the EGF-like 17 domain. The EGF-like 18; calcium-binding domain occupies 1238 to 1279 (DVDECDLNPHICLHGDCENTKGSFVCHCQLGYMVRKGATGCS). Positions 1280–1320 (DVDECEVGGHNCDSHASCLNIPGSFSCRCLPGWVGDGFECH) constitute an EGF-like 19; calcium-binding domain. Positions 1321–1361 (DLDECVSQEHRCSPRGDCLNVPGSYRCTCRQGFAGDGFFCE) constitute an EGF-like 20; calcium-binding domain. The EGF-like 21; calcium-binding domain maps to 1362 to 1403 (DRDECAENVDLCDNGQCLNAPGGYRCECEMGFDPTEDHRACQ). The EGF-like 22; calcium-binding domain occupies 1404 to 1444 (DVDECAQGNLCAFGSCENLPGMFRCICNGGYELDRGGGNCT). A glycan (N-linked (GlcNAc...) asparagine) is linked at Asn1442. The EGF-like 23; calcium-binding domain occupies 1445 to 1485 (DINECADPVNCINGVCINTPGSYLCSCPQDFELNPSGVGCV). One can recognise a TB 6 domain in the interval 1490–1546 (GNCFLETHDRGDSGISCSAEIGVGVTRASCCCSLGRAWGNPCELCPMANTTEYRTLC). N-linked (GlcNAc...) asparagine glycosylation occurs at Asn1538. The EGF-like 24; calcium-binding domain occupies 1563-1604 (DIDECQELPGLCQGGDCVNTFGSFQCECPPGYHLSEHTRICE). 6 disulfide bridges follow: Cys1567/Cys1579, Cys1574/Cys1588, Cys1590/Cys1603, Cys1609/Cys1621, Cys1616/Cys1630, and Cys1632/Cys1645. In terms of domain architecture, EGF-like 25; calcium-binding spans 1605 to 1646 (DIDECSTHSGICGPGTCYNTLGNYTCVCPAEYLQVNGGNNCM). The N-linked (GlcNAc...) asparagine glycan is linked to Asn1627. One can recognise a TB 7 domain in the interval 1651 to 1703 (SVCFRHYNGTCQNELAFNVTRKMCCCSYNIGQAWNRPCEACPTPISPDYQILC). N-linked (GlcNAc...) asparagine glycans are attached at residues Asn1658 and Asn1668. The 42-residue stretch at 1721-1762 (DIDECGEIPAICANGICINQIGSFRCECPAGFNYNSILLACE) folds into the EGF-like 26; calcium-binding domain. 21 cysteine pairs are disulfide-bonded: Cys1725-Cys1737, Cys1732-Cys1746, Cys1748-Cys1761, Cys1767-Cys1780, Cys1774-Cys1789, Cys1791-Cys1803, Cys1809-Cys1821, Cys1816-Cys1830, Cys1832-Cys1845, Cys1851-Cys1861, Cys1856-Cys1870, Cys1872-Cys1884, Cys1890-Cys1903, Cys1898-Cys1912, Cys1914-Cys1927, Cys1933-Cys1945, Cys1940-Cys1954, Cys1956-Cys1967, Cys1973-Cys1985, Cys1980-Cys1994, and Cys1996-Cys2009. The EGF-like 27; calcium-binding domain maps to 1763-1804 (DVDECGSRESPCQQNADCINIPGSYRCKCTRGYKLSPGGACV). In terms of domain architecture, EGF-like 28 spans 1805-1846 (GRNECREIPNVCSHGDCMDTEGSYMCLCHRGFQASADQTLCM). The EGF-like 29; calcium-binding domain maps to 1847 to 1885 (DIDECDRQPCGNGTCKNIIGSYNCLCFPGFVVTHNGDCV). Asn1858 carries N-linked (GlcNAc...) asparagine glycosylation. An EGF-like 30; calcium-binding domain is found at 1886 to 1928 (DFDECTTLVGQVCRFGHCLNTAGSFHCLCQDGFELTADGKNCV). The EGF-like 31; calcium-binding domain maps to 1929 to 1968 (DTNECLSLAGTCLPGTCQNLEGSFRCICPPGFQVQSDHCI). The 42-residue stretch at 1969–2010 (DIDECSEEPNLCLFGTCTNSPGSFQCLCPPGFVLSDNGHRCF) folds into the EGF-like 32; calcium-binding domain. In terms of domain architecture, TB 8 spans 2015 to 2068 (SFCFTRFEAGKCSVPKAFNTTKTRCCCSKRPGEGWGDPCELCPQEGSAAFQELC). Asn2033 carries N-linked (GlcNAc...) asparagine glycosylation. The EGF-like 33; calcium-binding domain maps to 2084-2125 (DVNECAENPGVCTNGVCVNTDGSFRCECPFGYSLDFTGINCV). Intrachain disulfides connect Cys2088–Cys2100, Cys2095–Cys2109, Cys2111–Cys2124, Cys2130–Cys2141, Cys2136–Cys2150, Cys2152–Cys2164, Cys2170–Cys2181, Cys2177–Cys2190, Cys2192–Cys2205, Cys2211–Cys2225, Cys2218–Cys2234, Cys2236–Cys2250, Cys2256–Cys2268, Cys2263–Cys2277, and Cys2279–Cys2292. The region spanning 2126–2165 (DTDECSVGHPCGQGTCTNVIGGFECACADGFEPGLMMTCE) is the EGF-like 34; calcium-binding domain. The region spanning 2166-2206 (DIDECSLNPLLCAFRCHNTEGSYLCTCPAGYTLREDGAMCR) is the EGF-like 35; calcium-binding domain. One can recognise an EGF-like 36; calcium-binding domain in the interval 2207–2251 (DVDECADGQQDCHARGMECKNLIGTFACVCPPGMRPLPGSGEGCT). Positions 2252–2293 (DDNECHAQPDLCVNGRCVNTAGSFRCDCDEGFQPSPTLTECH) constitute an EGF-like 37; calcium-binding domain. The 54-residue stretch at 2298–2351 (GPCFAEVLQTMCRSLSSSSEAVTRAECCCGGGRGWGPRCELCPLPGTSAYRKLC) folds into the TB 9 domain. The region spanning 2363-2404 (DVDECRMLAHLCAHGECINSLGSFRCHCQAGYTPDATATTCL) is the EGF-like 38; calcium-binding domain. Intrachain disulfides connect Cys2367-Cys2379, Cys2374-Cys2388, Cys2390-Cys2403, Cys2409-Cys2420, Cys2416-Cys2429, Cys2431-Cys2444, Cys2450-Cys2461, Cys2457-Cys2470, Cys2472-Cys2483, Cys2489-Cys2502, Cys2496-Cys2511, Cys2513-Cys2526, Cys2532-Cys2542, Cys2538-Cys2551, Cys2553-Cys2566, Cys2572-Cys2584, Cys2579-Cys2593, Cys2595-Cys2608, Cys2614-Cys2625, Cys2621-Cys2634, and Cys2636-Cys2648. Residues 2405–2445 (DMDECSQVPKPCTFLCKNTKGSFLCSCPRGYLLEEDGRTCK) enclose the EGF-like 39; calcium-binding domain. Residues 2446–2484 (DLDECTSRQHNCQFLCVNTVGAFTCRCPPGFTQHHQACF) enclose the EGF-like 40; calcium-binding domain. One can recognise an EGF-like 41; calcium-binding domain in the interval 2485–2527 (DNDECSAQPGPCGAHGHCHNTPGSFRCECHQGFTLVSSGHGCE). Residues 2528 to 2567 (DVNECDGPHRCQHGCQNQLGGYRCSCPQGFTQHSQWAQCV) form the EGF-like 42; calcium-binding domain. The EGF-like 43; calcium-binding domain maps to 2568 to 2609 (DENECALSPPTCGSASCRNTLGGFRCVCPSGFDFDQALGGCQ). Residues 2610-2649 (EVDECAGRRGPCSYSCANTPGGFLCGCPQGYFRAGQGHCV) form the EGF-like 44; calcium-binding domain. Asn2713 is a glycosylation site (N-linked (GlcNAc...) asparagine).

It belongs to the fibrillin family. Probably forms intermolecular disulfide bonds either with other FBN3 molecules or with other components of the microfibrils. In terms of tissue distribution, predominantly expressed in connective tissues such as skeletal muscle, tendon, skin, perichondrium and periosteum. Highly expressed in fetal lung, brain, kidney. Expressed at low level in prostate, testis, mammary gland, uterus, ovary, placenta, bladder, adrenal gland, thyroid, fetal thymus, fetal liver, liver, fetal heart and heart.

Its subcellular location is the secreted. The protein localises to the extracellular space. It is found in the extracellular matrix. Functionally, fibrillins are structural components of 10-12 nm extracellular calcium-binding microfibrils, which occur either in association with elastin or in elastin-free bundles. Fibrillin-containing microfibrils provide long-term force bearing structural support. The polypeptide is Fibrillin-3 (FBN3) (Homo sapiens (Human)).